Here is a 367-residue protein sequence, read N- to C-terminus: Flagellar P-ring protein (367 aa).

Residues 1 to 21 (MYVFKALAGIVLALVATLAHA) form the signal peptide.

Belongs to the FlgI family. The basal body constitutes a major portion of the flagellar organelle and consists of four rings (L,P,S, and M) mounted on a central rod.

It is found in the periplasm. It localises to the bacterial flagellum basal body. Functionally, assembles around the rod to form the L-ring and probably protects the motor/basal body from shearing forces during rotation. The protein is Flagellar P-ring protein of Salmonella arizonae (strain ATCC BAA-731 / CDC346-86 / RSK2980).